The following is a 453-amino-acid chain: Dibenzothiophene-sulfone monooxygenase (453 aa).

FMN-binding residues include Asp59, Thr106, His156, Tyr160, and Ser231.

The protein belongs to the NtaA/SnaA/DszA monooxygenase family. As to quaternary structure, homodimer.

It localises to the cytoplasm. It carries out the reaction dibenzothiophene 5,5-dioxide + FMNH2 + NADH + O2 = 2'-hydroxybiphenyl-2-sulfinate + FMN + NAD(+) + H2O + H(+). The protein operates within sulfur metabolism; dibenzothiophene degradation. Functionally, catalyzes the second step of the '4S' desulfurization pathway that removes covalently bound sulfur from dibenzothiophene (DBT) without breaking carbon-carbon bonds. Metabolizes DBT-sulfone (DBTO2 or DBT 5,5-dioxide) to 2-(2'-hydroxyphenyl)benzene sulphinate (HBPS). This Rhodococcus erythropolis (Arthrobacter picolinophilus) protein is Dibenzothiophene-sulfone monooxygenase.